A 459-amino-acid chain; its full sequence is uncharacterized protein (459 aa).

The TRAM domain occupies 9–67; the sequence is KLEVGQTFPVTIKRLGINGEGVGYFKRQVVFIPGALPGEEVVAETTKIQRGFAEAKVKK. Cys80, Cys86, Cys89, and Cys168 together coordinate [4Fe-4S] cluster. Positions 292, 321, 342, and 390 each coordinate S-adenosyl-L-methionine. Cys417 functions as the Nucleophile in the catalytic mechanism.

Belongs to the class I-like SAM-binding methyltransferase superfamily. RNA M5U methyltransferase family.

This is an uncharacterized protein from Bacillus cereus (strain ATCC 10987 / NRS 248).